The following is a 1379-amino-acid chain: DNA-directed RNA polymerase subunit beta'' (1379 aa).

4 residues coordinate Zn(2+): C224, C295, C302, and C305. The tract at residues S503–A524 is disordered.

This sequence belongs to the RNA polymerase beta' chain family. RpoC2 subfamily. In plastids the minimal PEP RNA polymerase catalytic core is composed of four subunits: alpha, beta, beta', and beta''. When a (nuclear-encoded) sigma factor is associated with the core the holoenzyme is formed, which can initiate transcription. Zn(2+) serves as cofactor.

It localises to the plastid. The enzyme catalyses RNA(n) + a ribonucleoside 5'-triphosphate = RNA(n+1) + diphosphate. DNA-dependent RNA polymerase catalyzes the transcription of DNA into RNA using the four ribonucleoside triphosphates as substrates. The sequence is that of DNA-directed RNA polymerase subunit beta'' from Cuscuta exaltata (Tall dodder).